A 194-amino-acid polypeptide reads, in one-letter code: MSEVRIAAEPRTEFGKGAARRARRAGKVPAVLYGHGIAPRHINLPGHDLMLALKTPNVLLRLEGVDEKESLVLPKSVQRDPIKGFLEHVDLLVVQRGEKVVVEVPLLVKGEVGAGGVLNLEMAQAEVRAEATRIPEGIEVDVDGLPIGTNVTAGDLKLPEGVELAMDPETIVMSVVAEAAPEATEEEEEGEAAE.

This sequence belongs to the bacterial ribosomal protein bL25 family. CTC subfamily. In terms of assembly, part of the 50S ribosomal subunit; part of the 5S rRNA/L5/L18/L25 subcomplex. Contacts the 5S rRNA. Binds to the 5S rRNA independently of L5 and L18.

In terms of biological role, this is one of the proteins that binds to the 5S RNA in the ribosome where it forms part of the central protuberance. The protein is Large ribosomal subunit protein bL25 of Thermobifida fusca (strain YX).